The primary structure comprises 83 residues: MKTLLLTLLVVTIVCLDLGYTLECHNQQSSQAPTTTGCSGGETNCYKKGWRDHRGYRIERGCGCPSVKKGIEINCCTTDRCNN.

The N-terminal stretch at 1-21 (MKTLLLTLLVVTIVCLDLGYT) is a signal peptide. 4 disulfides stabilise this stretch: Cys-24–Cys-45, Cys-38–Cys-62, Cys-64–Cys-75, and Cys-76–Cys-81.

The protein belongs to the three-finger toxin family. Short-chain subfamily. Type I alpha-neurotoxin sub-subfamily. Expressed by the venom gland.

The protein localises to the secreted. Functionally, binds to muscle nicotinic acetylcholine receptor (nAChR) and inhibit acetylcholine from binding to the receptor, thereby impairing neuromuscular transmission. The sequence is that of Alpha-neurotoxin NTX-4 from Naja sputatrix (Malayan spitting cobra).